The sequence spans 309 residues: tRNA pseudouridine synthase B (309 aa).

D39 serves as the catalytic Nucleophile.

This sequence belongs to the pseudouridine synthase TruB family. Type 1 subfamily.

It carries out the reaction uridine(55) in tRNA = pseudouridine(55) in tRNA. In terms of biological role, responsible for synthesis of pseudouridine from uracil-55 in the psi GC loop of transfer RNAs. The polypeptide is tRNA pseudouridine synthase B (Bacillus pumilus (strain SAFR-032)).